Reading from the N-terminus, the 179-residue chain is Large ribosomal subunit protein uL6 (179 aa).

This sequence belongs to the universal ribosomal protein uL6 family. As to quaternary structure, part of the 50S ribosomal subunit.

Functionally, this protein binds to the 23S rRNA, and is important in its secondary structure. It is located near the subunit interface in the base of the L7/L12 stalk, and near the tRNA binding site of the peptidyltransferase center. The sequence is that of Large ribosomal subunit protein uL6 from Pelobacter propionicus (strain DSM 2379 / NBRC 103807 / OttBd1).